A 161-amino-acid chain; its full sequence is Thy-1 membrane glycoprotein (161 aa).

Residues 1–19 (MNLAISIALLLTVLQVSRG) form the signal peptide. Q20 is modified (pyrrolidone carboxylic acid). In terms of domain architecture, Ig-like V-type spans 20 to 126 (QKVTSLTACL…SQNVTVLRDK (107 aa)). Disulfide bonds link C28-C130 and C38-C104. Residues N42 and N79 are each glycosylated (N-linked (GlcNAc...) asparagine). S82 carries the post-translational modification Phosphoserine. N119 is a glycosylation site (N-linked (GlcNAc...) asparagine). C130 carries GPI-anchor amidated cysteine; alternate lipidation. A propeptide spans 131-161 (EGISLLAQNTSWLLLLLLSLSLLQATDFMSL) (removed in mature form). N139 is a glycosylation site (N-linked (GlcNAc...) asparagine).

The protein localises to the cell membrane. Functionally, may play a role in cell-cell or cell-ligand interactions during synaptogenesis and other events in the brain. The sequence is that of Thy-1 membrane glycoprotein (THY1) from Homo sapiens (Human).